The primary structure comprises 135 residues: Small ribosomal subunit protein uS11 (135 aa).

Residues 1 to 10 (MPPKTRSQTG) show a composition bias toward polar residues. Residues 1–28 (MPPKTRSQTGAKKVRRKEKKNVAHGHAH) form a disordered region. The span at 12 to 28 (KKVRRKEKKNVAHGHAH) shows a compositional bias: basic residues.

Belongs to the universal ribosomal protein uS11 family. Part of the 30S ribosomal subunit. Interacts with proteins S7 and S18. Binds to IF-3.

Functionally, located on the platform of the 30S subunit, it bridges several disparate RNA helices of the 16S rRNA. Forms part of the Shine-Dalgarno cleft in the 70S ribosome. The chain is Small ribosomal subunit protein uS11 from Acidothermus cellulolyticus (strain ATCC 43068 / DSM 8971 / 11B).